Here is a 517-residue protein sequence, read N- to C-terminus: N-acetylglucosamine-1-phosphodiester alpha-N-acetylglucosaminidase (517 aa).

An N-terminal signal peptide occupies residues 1 to 25; that stretch reads MAAPRGPGLFLIPALLGLLGVAWCS. Residues 26–49 constitute a propeptide, removed in mature form; that stretch reads LSFGVSRDDDLLLPYPLARRRPSR. The disordered stretch occupies residues 49–75; the sequence is RDCARVRSGSPEQESWPPPPTNPGASH. Residues 50 to 453 are Lumenal-facing; the sequence is DCARVRSGSP…ASFTRTTWLA (404 aa). 5 disulfide bridges follow: Cys-116/Cys-149, Cys-133/Cys-324, Cys-308/Cys-315, Cys-363/Cys-374, and Cys-381/Cys-390. N-linked (GlcNAc...) asparagine glycans are attached at residues Asn-215 and Asn-297. The EGF-like domain occupies 359–391; that stretch reads SELDCGPSNCSQHGLCTETGCHCDAGWTGSNCS. N-linked (GlcNAc...) asparagine glycans are attached at residues Asn-367, Asn-389, and Asn-421. The chain crosses the membrane as a helical span at residues 454–474; sequence LTLTLIFLLLISTGVNVSLFL. At 475-517 the chain is on the cytoplasmic side; it reads GSRAERNRHLDGDYVYHPLQEVNGEALTAEKEHMEETSNPFKD. A Tyrosine-based internalization motif motif is present at residues 488 to 491; the sequence is YVYH. Residues 488-495 are mediates the interaction with AP4M1; that stretch reads YVYHPLQE. The NPF internalization motif motif lies at 511–515; sequence TSNPF.

As to quaternary structure, homotetramer arranged as two disulfide-linked homodimers. Interacts with AP4M1. In terms of processing, the precursor is cleaved and activated in the trans-Golgi network by a furin endopeptidase.

It localises to the golgi apparatus. It is found in the golgi stack membrane. The protein localises to the trans-Golgi network. The catalysed reaction is N(4)-[6-(N-acetyl-alpha-D-glucosaminyl-1-phospho)-alpha-D-mannosyl-(1-&gt;2)-alpha-D-mannosyl-(glycan)]-L-asparaginyl-[protein] + H2O = N(4)-[6-phospho-alpha-D-mannosyl-(1-&gt;2)-alpha-D-mannosyl-(glycan)]-L-asparaginyl-[protein] + N-acetyl-D-glucosamine + H(+). It participates in protein modification; protein glycosylation. Its function is as follows. Catalyzes the second step in the formation of the mannose 6-phosphate targeting signal on lysosomal enzyme oligosaccharides by removing GlcNAc residues from GlcNAc-alpha-P-mannose moieties, which are formed in the first step. Also hydrolyzes UDP-GlcNAc, a sugar donor for Golgi N-acetylglucosaminyltransferases. The sequence is that of N-acetylglucosamine-1-phosphodiester alpha-N-acetylglucosaminidase (Nagpa) from Mus musculus (Mouse).